The primary structure comprises 346 residues: Methionine import ATP-binding protein MetN 1 (346 aa).

In terms of domain architecture, ABC transporter spans isoleucine 2 to valine 241. Glycine 38–serine 45 is an ATP binding site.

Belongs to the ABC transporter superfamily. Methionine importer (TC 3.A.1.24) family. In terms of assembly, the complex is composed of two ATP-binding proteins (MetN), two transmembrane proteins (MetI) and a solute-binding protein (MetQ).

The protein localises to the cell membrane. It catalyses the reaction L-methionine(out) + ATP + H2O = L-methionine(in) + ADP + phosphate + H(+). The catalysed reaction is D-methionine(out) + ATP + H2O = D-methionine(in) + ADP + phosphate + H(+). In terms of biological role, part of the ABC transporter complex MetNIQ involved in methionine import. Responsible for energy coupling to the transport system. This Bacillus cereus (strain ZK / E33L) protein is Methionine import ATP-binding protein MetN 1.